Reading from the N-terminus, the 326-residue chain is tRNA uridine(34) hydroxylase (326 aa).

A Rhodanese domain is found at 123 to 217 (SDPDVILVDT…YLEEVKQEES (95 aa)). Catalysis depends on C177, which acts as the Cysteine persulfide intermediate.

The protein belongs to the TrhO family.

It carries out the reaction uridine(34) in tRNA + AH2 + O2 = 5-hydroxyuridine(34) in tRNA + A + H2O. Its function is as follows. Catalyzes oxygen-dependent 5-hydroxyuridine (ho5U) modification at position 34 in tRNAs. The polypeptide is tRNA uridine(34) hydroxylase (Shewanella denitrificans (strain OS217 / ATCC BAA-1090 / DSM 15013)).